The primary structure comprises 690 residues: Elongation factor G (690 aa).

In terms of domain architecture, tr-type G spans 8–283 (SKCRNIGIMA…AVVDFLPAPN (276 aa)). Residues 17 to 24 (AHIDAGKT), 81 to 85 (DTPGH), and 135 to 138 (NKMD) each bind GTP.

Belongs to the TRAFAC class translation factor GTPase superfamily. Classic translation factor GTPase family. EF-G/EF-2 subfamily.

It is found in the cytoplasm. Functionally, catalyzes the GTP-dependent ribosomal translocation step during translation elongation. During this step, the ribosome changes from the pre-translocational (PRE) to the post-translocational (POST) state as the newly formed A-site-bound peptidyl-tRNA and P-site-bound deacylated tRNA move to the P and E sites, respectively. Catalyzes the coordinated movement of the two tRNA molecules, the mRNA and conformational changes in the ribosome. The sequence is that of Elongation factor G from Ehrlichia chaffeensis (strain ATCC CRL-10679 / Arkansas).